The primary structure comprises 1039 residues: Beta-galactosidase (1039 aa).

Substrate is bound by residues Asn-103 and Asp-201. A Na(+)-binding site is contributed by Asp-201. Positions 415, 417, and 460 each coordinate Mg(2+). Residues Glu-460 and 536-539 contribute to the substrate site; that span reads EYAH. Catalysis depends on Glu-460, which acts as the Proton donor. The active-site Nucleophile is Glu-536. Asn-596 contributes to the Mg(2+) binding site. 2 residues coordinate Na(+): Phe-600 and Asn-603. Positions 603 and 1012 each coordinate substrate.

The protein belongs to the glycosyl hydrolase 2 family. Homotetramer. Mg(2+) serves as cofactor. Requires Na(+) as cofactor.

It catalyses the reaction Hydrolysis of terminal non-reducing beta-D-galactose residues in beta-D-galactosides.. Its activity is regulated as follows. Inhibited by zinc, copper and nickel ions. Activated by 2-mercaptoethanol and inhibited by EDTA in vitro. The protein is Beta-galactosidase (lacZ) of Pseudoalteromonas haloplanktis (Alteromonas haloplanktis).